The following is a 290-amino-acid chain: 33 kDa chaperonin (290 aa).

Intrachain disulfides connect Cys-235–Cys-237 and Cys-268–Cys-271.

This sequence belongs to the HSP33 family. Post-translationally, under oxidizing conditions two disulfide bonds are formed involving the reactive cysteines. Under reducing conditions zinc is bound to the reactive cysteines and the protein is inactive.

Its subcellular location is the cytoplasm. In terms of biological role, redox regulated molecular chaperone. Protects both thermally unfolding and oxidatively damaged proteins from irreversible aggregation. Plays an important role in the bacterial defense system toward oxidative stress. The polypeptide is 33 kDa chaperonin (Streptococcus pyogenes serotype M49 (strain NZ131)).